Here is a 301-residue protein sequence, read N- to C-terminus: Putative phosphoenolpyruvate synthase regulatory protein (301 aa).

Residues 1 to 24 (MSEPVAPDGAQPAPAGATPQPLQP) are compositionally biased toward low complexity. The disordered stretch occupies residues 1–27 (MSEPVAPDGAQPAPAGATPQPLQPIAG). 181–188 (GVSRSGKT) is an ADP binding site.

Belongs to the pyruvate, phosphate/water dikinase regulatory protein family. PSRP subfamily.

The catalysed reaction is [pyruvate, water dikinase] + ADP = [pyruvate, water dikinase]-phosphate + AMP + H(+). The enzyme catalyses [pyruvate, water dikinase]-phosphate + phosphate + H(+) = [pyruvate, water dikinase] + diphosphate. Bifunctional serine/threonine kinase and phosphorylase involved in the regulation of the phosphoenolpyruvate synthase (PEPS) by catalyzing its phosphorylation/dephosphorylation. The chain is Putative phosphoenolpyruvate synthase regulatory protein from Cupriavidus pinatubonensis (strain JMP 134 / LMG 1197) (Cupriavidus necator (strain JMP 134)).